The following is a 175-amino-acid chain: Ribosome maturation factor RimM (175 aa).

The region spanning 95–175 (SEDEFYWREL…RIEVDWDPGF (81 aa)) is the PRC barrel domain.

It belongs to the RimM family. Binds ribosomal protein uS19.

The protein resides in the cytoplasm. An accessory protein needed during the final step in the assembly of 30S ribosomal subunit, possibly for assembly of the head region. Essential for efficient processing of 16S rRNA. May be needed both before and after RbfA during the maturation of 16S rRNA. It has affinity for free ribosomal 30S subunits but not for 70S ribosomes. The protein is Ribosome maturation factor RimM of Aliivibrio fischeri (strain MJ11) (Vibrio fischeri).